A 365-amino-acid polypeptide reads, in one-letter code: DNA N6-methyl methyltransferase (365 aa).

Belongs to the MT-A70-like family.

It catalyses the reaction a 2'-deoxyadenosine in DNA + S-adenosyl-L-methionine = an N(6)-methyl-2'-deoxyadenosine in DNA + S-adenosyl-L-homocysteine + H(+). Functionally, methylates DNA on the 6th position of adenine (N(6)-methyladenosine). N(6)-methyladenosine (m6A) DNA is involved in epigenetic transgenerational inheritance. This is DNA N6-methyl methyltransferase from Caenorhabditis elegans.